The following is a 255-amino-acid chain: 3-deoxy-manno-octulosonate cytidylyltransferase (255 aa).

The protein belongs to the KdsB family.

It localises to the cytoplasm. The catalysed reaction is 3-deoxy-alpha-D-manno-oct-2-ulosonate + CTP = CMP-3-deoxy-beta-D-manno-octulosonate + diphosphate. Its pathway is nucleotide-sugar biosynthesis; CMP-3-deoxy-D-manno-octulosonate biosynthesis; CMP-3-deoxy-D-manno-octulosonate from 3-deoxy-D-manno-octulosonate and CTP: step 1/1. It participates in bacterial outer membrane biogenesis; lipopolysaccharide biosynthesis. Activates KDO (a required 8-carbon sugar) for incorporation into bacterial lipopolysaccharide in Gram-negative bacteria. This is 3-deoxy-manno-octulosonate cytidylyltransferase from Thermodesulfovibrio yellowstonii (strain ATCC 51303 / DSM 11347 / YP87).